The sequence spans 291 residues: Formamidopyrimidine-DNA glycosylase (291 aa).

Pro-2 serves as the catalytic Schiff-base intermediate with DNA. Glu-3 functions as the Proton donor in the catalytic mechanism. The active-site Proton donor; for beta-elimination activity is Lys-58. Positions 104, 127, and 172 each coordinate DNA. The FPG-type zinc finger occupies 257–291 (FVYDRAGLPCRACGTPIRQIVQGQRSTFCCPTCQR). The active-site Proton donor; for delta-elimination activity is Arg-281.

The protein belongs to the FPG family. In terms of assembly, monomer. Requires Zn(2+) as cofactor.

The enzyme catalyses Hydrolysis of DNA containing ring-opened 7-methylguanine residues, releasing 2,6-diamino-4-hydroxy-5-(N-methyl)formamidopyrimidine.. The catalysed reaction is 2'-deoxyribonucleotide-(2'-deoxyribose 5'-phosphate)-2'-deoxyribonucleotide-DNA = a 3'-end 2'-deoxyribonucleotide-(2,3-dehydro-2,3-deoxyribose 5'-phosphate)-DNA + a 5'-end 5'-phospho-2'-deoxyribonucleoside-DNA + H(+). Involved in base excision repair of DNA damaged by oxidation or by mutagenic agents. Acts as a DNA glycosylase that recognizes and removes damaged bases. Has a preference for oxidized purines, such as 7,8-dihydro-8-oxoguanine (8-oxoG). Has AP (apurinic/apyrimidinic) lyase activity and introduces nicks in the DNA strand. Cleaves the DNA backbone by beta-delta elimination to generate a single-strand break at the site of the removed base with both 3'- and 5'-phosphates. The polypeptide is Formamidopyrimidine-DNA glycosylase (Ralstonia pickettii (strain 12J)).